We begin with the raw amino-acid sequence, 256 residues long: Transmembrane protein 187 (256 aa).

7 consecutive transmembrane segments (helical) span residues 8 to 28 (ALFH…TGIF), 51 to 71 (FLAM…GVYW), 94 to 112 (VFAG…RIGM), 119 to 139 (VLDQ…CLCL), 146 to 168 (WLFL…HPHG), 193 to 213 (NISS…FVVL), and 233 to 253 (FWSK…LTSL).

The protein resides in the membrane. The polypeptide is Transmembrane protein 187 (TMEM187) (Bos taurus (Bovine)).